The following is a 144-amino-acid chain: RxLR effector protein PITG_03192 (144 aa).

An N-terminal signal peptide occupies residues 1–24; it reads MRVGFVFALLVVSVIVCFNGLTSA. The short motif at 49-58 is the RxLR-dEER element; it reads RNLRASGEER. N-linked (GlcNAc...) asparagine glycosylation is present at asparagine 115. The chain crosses the membrane as a helical span at residues 122–142; the sequence is FFILATLVMFPIGVWAVVTNY.

It belongs to the RxLR effector family. In terms of assembly, interacts with the C-terminal portions the ER-associated potato NAC transcription factors NTP1 and NTP2.

It localises to the secreted. Its subcellular location is the host endoplasmic reticulum membrane. In terms of biological role, effector that is required for full virulence. Targets host NTP1 and NTP2 transcription factors and prevents their pathogen-associated molecular pattern (PAMP)-triggered re-localization from the endoplasmic reticulum into the nucleus, where they contribute to prevent disease progression by P.infestans. The chain is RxLR effector protein PITG_03192 from Phytophthora infestans (strain T30-4) (Potato late blight agent).